Here is a 545-residue protein sequence, read N- to C-terminus: Gamma-curcumene synthase (545 aa).

Residues D299, D303, N442, and E450 each coordinate Mg(2+). Positions 299–303 (DDTYD) match the DDXXD motif motif.

It belongs to the terpene synthase family. The cofactor is Mg(2+).

The protein localises to the cytoplasm. It is found in the cytosol. It carries out the reaction (2E,6E)-farnesyl diphosphate = gamma-curcumene + diphosphate. The protein operates within secondary metabolite biosynthesis; terpenoid biosynthesis. Functionally, sesquiterpene synthase involved in gamma-curcumene biosynthesis. The chain is Gamma-curcumene synthase from Pogostemon cablin (Patchouli).